The primary structure comprises 342 residues: Protein-glutamate methylesterase/protein-glutamine glutaminase 1 (342 aa).

The Response regulatory domain occupies 3–121 (RVLVIDDSLF…NIREIGGELK (119 aa)). A 4-aspartylphosphate modification is found at Asp54. Residues 141 to 340 (DSNARNVVLI…EKIVETIRAM (200 aa)) form the CheB-type methylesterase domain. Active-site residues include Ser153, His180, and Asp282.

The protein belongs to the CheB family. Phosphorylated by CheA. Phosphorylation of the N-terminal regulatory domain activates the methylesterase activity.

The protein resides in the cytoplasm. The enzyme catalyses [protein]-L-glutamate 5-O-methyl ester + H2O = L-glutamyl-[protein] + methanol + H(+). It carries out the reaction L-glutaminyl-[protein] + H2O = L-glutamyl-[protein] + NH4(+). Functionally, involved in chemotaxis. Part of a chemotaxis signal transduction system that modulates chemotaxis in response to various stimuli. Catalyzes the demethylation of specific methylglutamate residues introduced into the chemoreceptors (methyl-accepting chemotaxis proteins or MCP) by CheR. Also mediates the irreversible deamidation of specific glutamine residues to glutamic acid. This Methanospirillum hungatei JF-1 (strain ATCC 27890 / DSM 864 / NBRC 100397 / JF-1) protein is Protein-glutamate methylesterase/protein-glutamine glutaminase 1.